The following is a 342-amino-acid chain: Transmembrane protein 268 (342 aa).

Helical transmembrane passes span 106 to 126 (AFAVVFYVLVWANIYSTSQMF) and 133 to 153 (AGVLLATLAAFSLTLTLVLVF). The segment at 245 to 267 (VEGPEDLEDAPLLPSTPGPQERP) is disordered.

In terms of assembly, interacts with ITGAM; this interaction inhibits ITGAM degradation via the endosome-lysosome pathway. Interacts with ITGB4; this interaction prevents ITGB4 degradation.

Its subcellular location is the cell membrane. Its function is as follows. Stabilizes cell surface expression of ITGAM and participates in the adhesion and migration of phagocytes during bacterial clearance. This Mus musculus (Mouse) protein is Transmembrane protein 268.